We begin with the raw amino-acid sequence, 340 residues long: tRNA N6-adenosine threonylcarbamoyltransferase (340 aa).

The Fe cation site is built by His-111 and His-115. Residues 134 to 138, Asp-167, Gly-180, and Asn-272 contribute to the substrate site; that span reads LVSGG. Position 300 (Asp-300) interacts with Fe cation.

It belongs to the KAE1 / TsaD family. Fe(2+) is required as a cofactor.

The protein localises to the cytoplasm. It catalyses the reaction L-threonylcarbamoyladenylate + adenosine(37) in tRNA = N(6)-L-threonylcarbamoyladenosine(37) in tRNA + AMP + H(+). Its function is as follows. Required for the formation of a threonylcarbamoyl group on adenosine at position 37 (t(6)A37) in tRNAs that read codons beginning with adenine. Is involved in the transfer of the threonylcarbamoyl moiety of threonylcarbamoyl-AMP (TC-AMP) to the N6 group of A37, together with TsaE and TsaB. TsaD likely plays a direct catalytic role in this reaction. The protein is tRNA N6-adenosine threonylcarbamoyltransferase of Proteus mirabilis (strain HI4320).